A 30-amino-acid chain; its full sequence is Cyclotide mden-G (30 aa).

The cyclopeptide (Gly-Asn) cross-link spans 1–30 (GIPCAESCVYIPCITAALGCSCKNKVCYRN). Cystine bridges form between Cys-4–Cys-20, Cys-8–Cys-22, and Cys-13–Cys-27.

The protein belongs to the cyclotide family. Bracelet subfamily. Post-translationally, this is a cyclic peptide.

Probably participates in a plant defense mechanism. The chain is Cyclotide mden-G from Melicytus dentatus (Tree violet).